Consider the following 341-residue polypeptide: Ribosomal RNA small subunit methyltransferase H (341 aa).

S-adenosyl-L-methionine-binding positions include 47–49, aspartate 64, phenylalanine 91, aspartate 109, and glutamine 116; that span reads GGY.

It belongs to the methyltransferase superfamily. RsmH family.

The protein localises to the cytoplasm. The enzyme catalyses cytidine(1402) in 16S rRNA + S-adenosyl-L-methionine = N(4)-methylcytidine(1402) in 16S rRNA + S-adenosyl-L-homocysteine + H(+). Functionally, specifically methylates the N4 position of cytidine in position 1402 (C1402) of 16S rRNA. In Rhizobium leguminosarum bv. trifolii (strain WSM1325), this protein is Ribosomal RNA small subunit methyltransferase H.